The following is a 629-amino-acid chain: Arginine--tRNA ligase (629 aa).

Positions 128 to 138 match the 'HIGH' region motif; it reads VNPTKPLHMGH.

It belongs to the class-I aminoacyl-tRNA synthetase family.

The protein localises to the cytoplasm. The catalysed reaction is tRNA(Arg) + L-arginine + ATP = L-arginyl-tRNA(Arg) + AMP + diphosphate. The protein is Arginine--tRNA ligase (argS) of Pyrococcus horikoshii (strain ATCC 700860 / DSM 12428 / JCM 9974 / NBRC 100139 / OT-3).